Consider the following 276-residue polypeptide: Pantothenate synthetase (276 aa).

27–34 (MGNLHDGH) contributes to the ATP binding site. Catalysis depends on histidine 34, which acts as the Proton donor. Residue glutamine 58 participates in (R)-pantoate binding. Glutamine 58 contacts beta-alanine. An ATP-binding site is contributed by 145–148 (GKKD). Glutamine 151 is a (R)-pantoate binding site. Residues isoleucine 174 and 182–185 (LSSR) contribute to the ATP site.

It belongs to the pantothenate synthetase family. As to quaternary structure, homodimer.

The protein resides in the cytoplasm. It catalyses the reaction (R)-pantoate + beta-alanine + ATP = (R)-pantothenate + AMP + diphosphate + H(+). The protein operates within cofactor biosynthesis; (R)-pantothenate biosynthesis; (R)-pantothenate from (R)-pantoate and beta-alanine: step 1/1. Catalyzes the condensation of pantoate with beta-alanine in an ATP-dependent reaction via a pantoyl-adenylate intermediate. The chain is Pantothenate synthetase from Aromatoleum aromaticum (strain DSM 19018 / LMG 30748 / EbN1) (Azoarcus sp. (strain EbN1)).